A 514-amino-acid polypeptide reads, in one-letter code: Efflux pump aflT (514 aa).

The next 10 membrane-spanning stretches (helical) occupy residues 13 to 33 (ISGM…FCVA), 61 to 81 (SAYL…YALF), 85 to 105 (WVFL…GVAP), 116 to 136 (IAGV…AHIV), 146 to 166 (GLLG…GGAF), 174 to 194 (WCFY…LFLL), 218 to 238 (GTIV…WGGV), 247 to 267 (IIAL…IQVL), 289 to 309 (VFVF…PIWF), and 321 to 341 (GIDS…SGAV). Asparagine 343 carries an N-linked (GlcNAc...) asparagine glycan. Helical transmembrane passes span 351 to 371 (WFIV…LFTV), 378 to 398 (WIGF…QGAV), 411 to 431 (IGTA…TSVA), and 485 to 505 (LDVF…AVGI).

Belongs to the major facilitator superfamily. TCR/Tet family.

It localises to the cell membrane. Efflux pump; part of the gene cluster that mediates the biosynthesis of aflatoxins. This Aspergillus parasiticus (strain ATCC 56775 / NRRL 5862 / SRRC 143 / SU-1) protein is Efflux pump aflT.